The chain runs to 368 residues: Histidinol-phosphate aminotransferase (368 aa).

K229 carries the post-translational modification N6-(pyridoxal phosphate)lysine.

The protein belongs to the class-II pyridoxal-phosphate-dependent aminotransferase family. Histidinol-phosphate aminotransferase subfamily. Homodimer. Requires pyridoxal 5'-phosphate as cofactor.

The enzyme catalyses L-histidinol phosphate + 2-oxoglutarate = 3-(imidazol-4-yl)-2-oxopropyl phosphate + L-glutamate. It participates in amino-acid biosynthesis; L-histidine biosynthesis; L-histidine from 5-phospho-alpha-D-ribose 1-diphosphate: step 7/9. The chain is Histidinol-phosphate aminotransferase from Acidovorax sp. (strain JS42).